The following is a 232-amino-acid chain: Sugar fermentation stimulation protein homolog (232 aa).

It belongs to the SfsA family.

This Acidithiobacillus ferrooxidans (strain ATCC 23270 / DSM 14882 / CIP 104768 / NCIMB 8455) (Ferrobacillus ferrooxidans (strain ATCC 23270)) protein is Sugar fermentation stimulation protein homolog.